We begin with the raw amino-acid sequence, 572 residues long: MCGIFAAFRHEDVHRYKPKALQLSKRIRHRGPDWSGNAIKNSTIFVHERLAIVGVESGAQPITSSDGEYMLCVNGEIYNHIQLREECADYEFGTLSDCEPIIPMYLKHDIDAPKYLDGMFAWTLYDAKQDRIVAARDPIGITTLYMGRSSASPKTVYFASELKCLTDDCDTITAFPPGHVYDSKTDKITRYFTPDWLDEKRIPSTPIDYMAIRHSLEKAVRKRLMAEVPYGVLLSGGLDSSLIASIAARETAKATNDVEPSTYDSKARHLAGIDDDGKLHTAGWTSLHSFAIGLPNAPDLQAARKVAKFIGSIHHEHTFTLQEGLDALDDVIYHLETYDVTTIRASTPMFLLSRKIKAQGVKMVLSGEGSDEIFGGYLYFAQAPSAAEFHTESVQRVKNLHLADCLRANKSTMAWGLEARVPFLDREFLQLCMNIDPNEKMIKPKEGRIEKYILRKAFDTTGEPDAKPYLPEEILWRQKEQFSDGVGYSWIDGLKDTAEAVISDEMFASPKAEWGSDIPTTKEAFWYRLKFDALFPQKTVADTVMRWIPKADWGCAEDPSGRYAQIHEKHIE.

C2 (for GATase activity) is an active-site residue. Positions 2-186 (CGIFAAFRHE…PGHVYDSKTD (185 aa)) constitute a Glutamine amidotransferase type-2 domain. Residues 49–53 (RLAIV), 74–76 (NGE), and D97 each bind L-glutamine. The Asparagine synthetase domain maps to 194-546 (PDWLDEKRIP…QKTVADTVMR (353 aa)). Residue L233 coordinates ATP. At S265 the chain carries Phosphoserine. ATP is bound by residues I292 and 366-367 (SG). S509 carries the post-translational modification Phosphoserine.

It catalyses the reaction L-aspartate + L-glutamine + ATP + H2O = L-asparagine + L-glutamate + AMP + diphosphate + H(+). Its pathway is amino-acid biosynthesis; L-asparagine biosynthesis; L-asparagine from L-aspartate (L-Gln route): step 1/1. The chain is Asparagine synthetase [glutamine-hydrolyzing] 1 (ASN1) from Saccharomyces cerevisiae (strain ATCC 204508 / S288c) (Baker's yeast).